A 345-amino-acid chain; its full sequence is N-acetyl-gamma-glutamyl-phosphate reductase (345 aa).

The active site involves Cys149.

This sequence belongs to the NAGSA dehydrogenase family. Type 1 subfamily.

It localises to the cytoplasm. The enzyme catalyses N-acetyl-L-glutamate 5-semialdehyde + phosphate + NADP(+) = N-acetyl-L-glutamyl 5-phosphate + NADPH + H(+). It functions in the pathway amino-acid biosynthesis; L-arginine biosynthesis; N(2)-acetyl-L-ornithine from L-glutamate: step 3/4. Catalyzes the NADPH-dependent reduction of N-acetyl-5-glutamyl phosphate to yield N-acetyl-L-glutamate 5-semialdehyde. The protein is N-acetyl-gamma-glutamyl-phosphate reductase of Bacillus cereus (strain ATCC 10987 / NRS 248).